Here is a 109-residue protein sequence, read N- to C-terminus: Parvalbumin beta (109 aa).

2 consecutive EF-hand domains span residues 38 to 73 (KSKD…FDGK) and 77 to 109 (LTDK…VTKG). Ca(2+) contacts are provided by D51, D53, S55, Y57, E59, E62, D90, D92, D94, K96, and E101.

Belongs to the parvalbumin family.

In muscle, parvalbumin is thought to be involved in relaxation after contraction. It binds two calcium ions. This chain is Parvalbumin beta, found in Boa constrictor (Boa).